A 210-amino-acid chain; its full sequence is LexA repressor (210 aa).

Residues 31-51 constitute a DNA-binding region (H-T-H motif); that stretch reads RVEISKELGFRSPNAAEEHLK. Residues S126 and K163 each act as for autocatalytic cleavage activity in the active site.

The protein belongs to the peptidase S24 family. As to quaternary structure, homodimer.

The catalysed reaction is Hydrolysis of Ala-|-Gly bond in repressor LexA.. Its function is as follows. Represses a number of genes involved in the response to DNA damage (SOS response), including recA and lexA. In the presence of single-stranded DNA, RecA interacts with LexA causing an autocatalytic cleavage which disrupts the DNA-binding part of LexA, leading to derepression of the SOS regulon and eventually DNA repair. The sequence is that of LexA repressor from Histophilus somni (strain 129Pt) (Haemophilus somnus).